The sequence spans 690 residues: Eukaryotic translation initiation factor 3 subunit B (690 aa).

Over residues 1–11 the composition is skewed to basic and acidic residues; that stretch reads MAKKKSEEHSG. A disordered region spans residues 1 to 36; that stretch reads MAKKKSEEHSGADANDSDYQEEPNFEDPPGFVDNIS. Positions 15–25 are enriched in acidic residues; the sequence is NDSDYQEEPNF. The region spanning 57–141 is the RRM domain; sequence SVVVVDNIPK…HTFAVNLFTD (85 aa). 5 WD repeats span residues 207–246, 293–331, 334–369, 442–484, and 530–575; these read TRER…KIQK, DGMS…LLDL, IKIP…TLME, EIRE…KPSL, and PDHF…IKRT. A coiled-coil region spans residues 595 to 645; it reads EEKQKEIKKNLKKYYAAFEQKDRLRLTRASKELLEKRSQLRETFMEYRNKR.

This sequence belongs to the eIF-3 subunit B family. In terms of assembly, component of the eukaryotic translation initiation factor 3 (eIF-3) complex. The eIF-3 complex interacts with pix. Interacts with mxt.

Its subcellular location is the cytoplasm. Its function is as follows. RNA-binding component of the eukaryotic translation initiation factor 3 (eIF-3) complex, which is involved in protein synthesis of a specialized repertoire of mRNAs and, together with other initiation factors, stimulates binding of mRNA and methionyl-tRNAi to the 40S ribosome. The eIF-3 complex specifically targets and initiates translation of a subset of mRNAs involved in cell proliferation. This is Eukaryotic translation initiation factor 3 subunit B from Drosophila erecta (Fruit fly).